Here is a 265-residue protein sequence, read N- to C-terminus: 3-methyl-2-oxobutanoate hydroxymethyltransferase (265 aa).

Asp45 and Asp84 together coordinate Mg(2+). 3-methyl-2-oxobutanoate is bound by residues Asp45–Ser46, Asp84, and Lys112. Position 114 (Glu114) interacts with Mg(2+). Glu181 serves as the catalytic Proton acceptor.

The protein belongs to the PanB family. Homodecamer; pentamer of dimers. Mg(2+) is required as a cofactor.

The protein localises to the cytoplasm. It catalyses the reaction 3-methyl-2-oxobutanoate + (6R)-5,10-methylene-5,6,7,8-tetrahydrofolate + H2O = 2-dehydropantoate + (6S)-5,6,7,8-tetrahydrofolate. Its pathway is cofactor biosynthesis; (R)-pantothenate biosynthesis; (R)-pantoate from 3-methyl-2-oxobutanoate: step 1/2. Functionally, catalyzes the reversible reaction in which hydroxymethyl group from 5,10-methylenetetrahydrofolate is transferred onto alpha-ketoisovalerate to form ketopantoate. The protein is 3-methyl-2-oxobutanoate hydroxymethyltransferase of Yersinia pestis bv. Antiqua (strain Antiqua).